A 225-amino-acid polypeptide reads, in one-letter code: Transcription factor MYB1 (225 aa).

HTH myb-type domains lie at 11-67 (LGRV…KPSI) and 68-118 (KRGH…YKKH). 2 consecutive DNA-binding regions (H-T-H motif) follow at residues 39-63 (WKRV…LNYL) and 91-114 (WSLI…NTHL).

No interactions with bHLH.

Its subcellular location is the nucleus. Its function is as follows. Activates DODA1 and CYP76AD1 in the betalain red pigment pathway. The polypeptide is Transcription factor MYB1 (Beta vulgaris (Sugar beet)).